Reading from the N-terminus, the 195-residue chain is MRRWKAAALVSLICSSLLSVWMCQEGLLLGHRLGPALAPLRRPPRTLDARIARLAQYRALLQGAPDAVELRELSPWAARIPGPRRRAGPRRRRARPGARPCGLRELEVRVSELGLGYTSDETVLFRYCAGACEAAIRIYDLGLRRLRQRRRVRRERARAHPCCRPTAYEDEVSFLDVHSRYHTLQELSARECACV.

Positions 1–19 (MRRWKAAALVSLICSSLLS) are cleaved as a signal peptide. Residues 20–95 (VWMCQEGLLL…RAGPRRRRAR (76 aa)) constitute a propeptide that is removed on maturation. 3 disulfides stabilise this stretch: Cys101–Cys163, Cys128–Cys192, and Cys132–Cys194. Arg147, Arg156, and Arg158 together coordinate heparan sulfate group.

Belongs to the TGF-beta family. GDNF subfamily. As to quaternary structure, homodimer; disulfide-linked. Interacts with GFRA2 coreceptor and RET: forms a 2:2:2 ternary complex composed of NRTN ligand, GFRA2 and RET receptor. Also forms a 4:4:4 tetrameric complex composed of 4 copies of NRTN ligand, GFRA2 and RET receptor, which prevents endocytosis of RET. In terms of tissue distribution, widespread distribution.

The protein resides in the secreted. Its function is as follows. Growth factor that supports the survival of sympathetic neurons in culture. May regulate the development and maintenance of the CNS. Involved in the development of the neural crest. Might control the size of non-neuronal cell population such as haemopoietic cells. Acts by binding to its coreceptor, GFRA2, leading to autophosphorylation and activation of the RET receptor. Heparan sulfate-binding is required for signaling. The polypeptide is Neurturin (Nrtn) (Mus musculus (Mouse)).